The chain runs to 153 residues: Large ribosomal subunit protein uL30 (153 aa).

This sequence belongs to the universal ribosomal protein uL30 family. As to quaternary structure, part of the 50S ribosomal subunit.

This chain is Large ribosomal subunit protein uL30, found in Methanosarcina mazei (strain ATCC BAA-159 / DSM 3647 / Goe1 / Go1 / JCM 11833 / OCM 88) (Methanosarcina frisia).